The following is a 132-amino-acid chain: Chemokine-like protein TAFA-5 (132 aa).

The N-terminal stretch at 1–43 (MAPSPRTGSRQDATALPSMSSTFWAFMILASLLIAYCSQLAAG) is a signal peptide. The N-linked (GlcNAc...) asparagine glycan is linked to asparagine 113.

Belongs to the TAFA family.

The protein resides in the secreted. Its function is as follows. Acts as a chemokine-like protein by regulating cell proliferation and migration through activation of G protein-coupled receptors (GPCRs), such as S1PR2 and FPR2. Stimulates chemotactic migration of macrophages mediated by the MAPK3/ERK1 and AKT1 pathway. Blocks TNFSF11/RANKL-induced osteoclast formation from macrophages by inhibiting up-regulation of osteoclast fusogenic and differentiation genes. Stimulation of macrophage migration and inhibition of osteoclast formation is mediated through the GPCR FPR2. Acts as an adipokine by negatively regulating vascular smooth muscle cell (VSMC) proliferation and migration in response to platelet-derived growth factor stimulation via GPCR S1PR2 and G protein GNA12/GNA13-transmitted RHOA signaling. Inhibits injury-induced cell proliferation and neointima formation in the femoral arteries. The sequence is that of Chemokine-like protein TAFA-5 (TAFA5) from Bos taurus (Bovine).